The sequence spans 201 residues: Protein Thf1 (201 aa).

Positions 174-201 (IYKSSISKMEQAKELIQEQRIKDKKKTL) form a coiled coil.

Belongs to the THF1 family.

Functionally, may be involved in photosynthetic membrane biogenesis. The protein is Protein Thf1 of Prochlorococcus marinus (strain MIT 9312).